The chain runs to 266 residues: Enterotoxin type C-1 (266 aa).

The N-terminal stretch at 1 to 27 (MNKSRFISCVILIFALILVLFTPNVLA) is a signal peptide. A disulfide bond links C120 and C137.

It belongs to the staphylococcal/streptococcal toxin family. Interacts with host MHC class II molecules composed of alpha/HLA-DRA and beta/HLA-DRB1 chains.

It localises to the secreted. Staphylococcal enterotoxin that activates the host immune system by binding as unprocessed molecules to major histocompatibility (MHC) complex class II and T-cell receptor (TCR) molecules. In turn, this ternary complex activates a large number of T-lymphocytes initiating a systemic release of pro-inflammatory cytokines. Inhibits SEC1-mediated T-cell activation in the absence of MHC class II by competing with SEC1 for binding to the host TCR. Also causes the intoxication staphylococcal food poisoning syndrome. In Staphylococcus aureus, this protein is Enterotoxin type C-1 (entC1).